Reading from the N-terminus, the 44-residue chain is Iota-conotoxin-like R11.11 (44 aa).

Cystine bridges form between Cys-5–Cys-19, Cys-12–Cys-22, Cys-18–Cys-27, and Cys-21–Cys-36. Arg-44 is a propeptide (removed by a carboxypeptidase).

The protein belongs to the conotoxin I1 superfamily. Expressed by the venom duct.

The protein localises to the secreted. Its function is as follows. Iota-conotoxins bind to voltage-gated sodium channels (Nav) and act as agonists by shifting the voltage-dependence of activation to more hyperpolarized levels. Produces general excitatory symptoms. In Conus radiatus (Rayed cone), this protein is Iota-conotoxin-like R11.11.